The chain runs to 138 residues: uncharacterized protein (138 aa).

Positions 1–35 are cleaved as a signal peptide; it reads MVAPAARVFLRAVRAALTSTVPDLLCLLARGSPRG.

Isoform 1 is highly expressed in small intestine, testis and kidney, medium expressed in brain and heart and low expressed in colon; it could not be detected in liver, adrenal gland and pancreas.

The protein resides in the secreted. This is an uncharacterized protein from Homo sapiens (Human).